The primary structure comprises 239 residues: tRNA (guanine-N(1)-)-methyltransferase (239 aa).

S-adenosyl-L-methionine contacts are provided by residues G108 and 127-132; that span reads LGDYVL.

This sequence belongs to the RNA methyltransferase TrmD family. In terms of assembly, homodimer.

Its subcellular location is the cytoplasm. It catalyses the reaction guanosine(37) in tRNA + S-adenosyl-L-methionine = N(1)-methylguanosine(37) in tRNA + S-adenosyl-L-homocysteine + H(+). Specifically methylates guanosine-37 in various tRNAs. The protein is tRNA (guanine-N(1)-)-methyltransferase of Streptococcus pneumoniae serotype 19F (strain G54).